The following is a 430-amino-acid chain: Asparagine--tRNA ligase (430 aa).

Belongs to the class-II aminoacyl-tRNA synthetase family. Homodimer.

Its subcellular location is the cytoplasm. It catalyses the reaction tRNA(Asn) + L-asparagine + ATP = L-asparaginyl-tRNA(Asn) + AMP + diphosphate + H(+). The chain is Asparagine--tRNA ligase from Shouchella clausii (strain KSM-K16) (Alkalihalobacillus clausii).